The chain runs to 481 residues: Anti-sigma-I factor RsgI5 (481 aa).

Topologically, residues 1-50 are cytoplasmic; that stretch reads MKHKGIVLKLTKSKAIISTNDFQCYYIKRSPTIYVGKEVEFTNKDIVTKK. Residues 3–50 enclose the RsgI N-terminal anti-sigma domain; the sequence is HKGIVLKLTKSKAIISTNDFQCYYIKRSPTIYVGKEVEFTNKDIVTKK. The helical transmembrane segment at 51-71 threads the bilayer; the sequence is SVLIKPALSVACFILLIACVL. Over 72-481 the chain is Extracellular; it reads SLSKIINNIS…DATFIGIKVD (410 aa). A disordered region spans residues 255–339; sequence ASEERNPEES…TPTPTPTPAD (85 aa). Residues 256 to 265 show a composition bias toward basic and acidic residues; it reads SEERNPEESP. Low complexity-rich tracts occupy residues 266–283 and 291–315; these read KMTP…TPTD and NTPT…TSTP. The span at 316-336 shows a compositional bias: pro residues; that stretch reads APKPTSTPTPTLMPTPTPTPT.

In terms of assembly, interacts (via RsgI N-terminal anti-sigma domain) with SigI5.

Its subcellular location is the cell membrane. Functionally, anti-sigma factor for SigI5. Negatively regulates SigI5 activity through direct interaction. Binding of the polysaccharide substrate to the extracellular C-terminal sensing domain of RsgI5 may induce a conformational change in its N-terminal cytoplasmic region, leading to the release and activation of SigI5. The protein is Anti-sigma-I factor RsgI5 of Acetivibrio thermocellus (strain ATCC 27405 / DSM 1237 / JCM 9322 / NBRC 103400 / NCIMB 10682 / NRRL B-4536 / VPI 7372) (Clostridium thermocellum).